The chain runs to 359 residues: Ni-sirohydrochlorin a,c-diamide reductive cyclase complex, component CfbD (359 aa).

Belongs to the NifD/NifK/NifE/NifN family. Homodimer or monomer. The Ni-sirohydrochlorin a,c-diamide reductive cyclase complex is composed of a NifH homolog component CfbC and a NifD homolog component CfbD. [4Fe-4S] cluster serves as cofactor.

The catalysed reaction is Ni-sirohydrochlorin a,c-diamide + 3 AH2 + ATP + H2O = 15,17(3)-seco-F430-17(3)-acid + 3 A + ADP + phosphate. In terms of biological role, involved in the biosynthesis of the unique nickel-containing tetrapyrrole coenzyme F430, the prosthetic group of methyl-coenzyme M reductase (MCR), which plays a key role in methanogenesis and anaerobic methane oxidation. Catalyzes both the six-electron reduction of the tetrahydroporphyrin ring system and the gamma-lactamization of the c-acetamide side chain of Ni-sirohydrochlorin a,c-diamide to yield 15,17(3)-seco-F430-17(3)-acid (seco-F430), the last intermediate in the biosynthesis of the coenzyme F430. This is Ni-sirohydrochlorin a,c-diamide reductive cyclase complex, component CfbD from Methanothermobacter thermautotrophicus (strain ATCC 29096 / DSM 1053 / JCM 10044 / NBRC 100330 / Delta H) (Methanobacterium thermoautotrophicum).